Reading from the N-terminus, the 465-residue chain is Cysteine--tRNA ligase (465 aa).

Zn(2+) is bound at residue Cys-27. A 'HIGH' region motif is present at residues 29–39; that stretch reads PTVYDFIHIGN. Residues Cys-207, His-232, and Glu-236 each coordinate Zn(2+). Residues 264 to 268 carry the 'KMSKS' region motif; sequence KMSKS. Position 267 (Lys-267) interacts with ATP.

The protein belongs to the class-I aminoacyl-tRNA synthetase family. As to quaternary structure, monomer. Zn(2+) serves as cofactor.

The protein localises to the cytoplasm. The enzyme catalyses tRNA(Cys) + L-cysteine + ATP = L-cysteinyl-tRNA(Cys) + AMP + diphosphate. The protein is Cysteine--tRNA ligase of Caldicellulosiruptor saccharolyticus (strain ATCC 43494 / DSM 8903 / Tp8T 6331).